A 216-amino-acid chain; its full sequence is L-fuculose phosphate aldolase (216 aa).

Residues 28–29 (GN), 43–44 (TG), and 71–72 (SS) each bind substrate. The Proton donor/acceptor role is filled by glutamate 73. The Zn(2+) site is built by glutamate 73, histidine 92, histidine 94, and histidine 155.

Belongs to the aldolase class II family. AraD/FucA subfamily. In terms of assembly, homotetramer. Zn(2+) is required as a cofactor.

The enzyme catalyses L-fuculose 1-phosphate = (S)-lactaldehyde + dihydroxyacetone phosphate. It participates in carbohydrate degradation; L-fucose degradation; L-lactaldehyde and glycerone phosphate from L-fucose: step 3/3. Involved in the degradation of L-fucose and D-arabinose. Catalyzes the reversible cleavage of L-fuculose 1-phosphate (Fuc1P) to yield dihydroxyacetone phosphate (DHAP) and L-lactaldehyde. In Haemophilus influenzae (strain ATCC 51907 / DSM 11121 / KW20 / Rd), this protein is L-fuculose phosphate aldolase.